The chain runs to 234 residues: Leucyl/phenylalanyl-tRNA--protein transferase (234 aa).

Belongs to the L/F-transferase family.

Its subcellular location is the cytoplasm. It catalyses the reaction N-terminal L-lysyl-[protein] + L-leucyl-tRNA(Leu) = N-terminal L-leucyl-L-lysyl-[protein] + tRNA(Leu) + H(+). It carries out the reaction N-terminal L-arginyl-[protein] + L-leucyl-tRNA(Leu) = N-terminal L-leucyl-L-arginyl-[protein] + tRNA(Leu) + H(+). The enzyme catalyses L-phenylalanyl-tRNA(Phe) + an N-terminal L-alpha-aminoacyl-[protein] = an N-terminal L-phenylalanyl-L-alpha-aminoacyl-[protein] + tRNA(Phe). In terms of biological role, functions in the N-end rule pathway of protein degradation where it conjugates Leu, Phe and, less efficiently, Met from aminoacyl-tRNAs to the N-termini of proteins containing an N-terminal arginine or lysine. The chain is Leucyl/phenylalanyl-tRNA--protein transferase from Salmonella arizonae (strain ATCC BAA-731 / CDC346-86 / RSK2980).